A 144-amino-acid chain; its full sequence is Maximins 6/H10 (144 aa).

An N-terminal signal peptide occupies residues 1–18 (MNFKYIVAVSFLIASAYA). The propeptide occupies 19-43 (RSVKNDEQSLSQRDVLDEESLREIR). Residue N70 is modified to Asparagine amide. The propeptide occupies 74 to 123 (TAEDHEVMKRLEAVMRDLDSLDHPEEASERETRGFNQEEIANRFTKKEKR). Position 143 is a leucine amide (L143).

The protein belongs to the bombinin family. As to expression, expressed by the skin glands.

The protein resides in the secreted. Maximin-6 shows antimicrobial activity against bacteria and against the fungus C.albicans. It has little hemolytic activity. In terms of biological role, maximin-H10 shows antimicrobial activity against bacteria and against the fungus C.albicans. Shows strong hemolytic activity. The sequence is that of Maximins 6/H10 from Bombina maxima (Giant fire-bellied toad).